Reading from the N-terminus, the 116-residue chain is Evasin P1180 (116 aa).

The N-terminal stretch at 1–25 (MARNWSFRVIFVSAMWCALLKFATL) is a signal peptide. 4 cysteine pairs are disulfide-bonded: Cys38-Cys58, Cys54-Cys95, Cys71-Cys100, and Cys90-Cys109. Residues Asn45, Asn73, and Asn104 are each glycosylated (N-linked (GlcNAc...) asparagine).

The protein resides in the secreted. In terms of biological role, salivary chemokine-binding protein which binds to host chemokines CCL2, CCL3, CCL4, CCL8 and CCL18. The protein is Evasin P1180 of Amblyomma triste (Neotropical tick).